Reading from the N-terminus, the 406-residue chain is Arginine biosynthesis bifunctional protein ArgJ (406 aa).

6 residues coordinate substrate: threonine 152, lysine 179, threonine 190, glutamate 277, asparagine 401, and serine 406. Threonine 190 serves as the catalytic Nucleophile.

This sequence belongs to the ArgJ family. Heterotetramer of two alpha and two beta chains.

It localises to the cytoplasm. It catalyses the reaction N(2)-acetyl-L-ornithine + L-glutamate = N-acetyl-L-glutamate + L-ornithine. The catalysed reaction is L-glutamate + acetyl-CoA = N-acetyl-L-glutamate + CoA + H(+). It functions in the pathway amino-acid biosynthesis; L-arginine biosynthesis; L-ornithine and N-acetyl-L-glutamate from L-glutamate and N(2)-acetyl-L-ornithine (cyclic): step 1/1. The protein operates within amino-acid biosynthesis; L-arginine biosynthesis; N(2)-acetyl-L-ornithine from L-glutamate: step 1/4. In terms of biological role, catalyzes two activities which are involved in the cyclic version of arginine biosynthesis: the synthesis of N-acetylglutamate from glutamate and acetyl-CoA as the acetyl donor, and of ornithine by transacetylation between N(2)-acetylornithine and glutamate. The chain is Arginine biosynthesis bifunctional protein ArgJ from Neisseria gonorrhoeae.